The primary structure comprises 425 residues: UPF0597 protein VFMJ11_0655 (425 aa).

Belongs to the UPF0597 family.

The chain is UPF0597 protein VFMJ11_0655 from Aliivibrio fischeri (strain MJ11) (Vibrio fischeri).